The primary structure comprises 181 residues: HGPRTase-like protein 2 (181 aa).

Belongs to the purine/pyrimidine phosphoribosyltransferase family. Archaeal HPRT subfamily.

Functionally, may catalyze a purine salvage reaction, the substrate is unknown. The chain is HGPRTase-like protein 2 from Haloferax volcanii (strain ATCC 29605 / DSM 3757 / JCM 8879 / NBRC 14742 / NCIMB 2012 / VKM B-1768 / DS2) (Halobacterium volcanii).